Reading from the N-terminus, the 227-residue chain is Uridylate kinase (227 aa).

Lys7–Lys11 is a binding site for ATP. Residue Gly44 coordinates UMP. ATP is bound by residues Gly45 and Arg49. UMP is bound by residues Asp66 and Phe114 to Thr120. Thr140, Asn141, Tyr146, and Asp149 together coordinate ATP.

Belongs to the UMP kinase family. In terms of assembly, homohexamer.

The protein resides in the cytoplasm. It catalyses the reaction UMP + ATP = UDP + ADP. It functions in the pathway pyrimidine metabolism; CTP biosynthesis via de novo pathway; UDP from UMP (UMPK route): step 1/1. Unlike most bacteria, is not activated by GTP. UTP acts as a competitive inhibitor against both substrates. High concentration of UMP abolishes the inhibition of UTP at low ATP concentrations, indicating that UTP binds to the acceptor site (UMP site). Catalyzes the reversible phosphorylation of UMP to UDP, with ATP as the most efficient phosphate donor. Is also able to phosphorylate dUMP, although much less efficiently. The sequence is that of Uridylate kinase (pyrH) from Saccharolobus solfataricus (strain ATCC 35092 / DSM 1617 / JCM 11322 / P2) (Sulfolobus solfataricus).